Consider the following 658-residue polypeptide: UvrABC system protein B (658 aa).

In terms of domain architecture, Helicase ATP-binding spans 25 to 414; the sequence is KSLKNNNHYQ…LSKKNVAEQI (390 aa). 38-45 contacts ATP; sequence GVTGSGKT. Residues 91–114 carry the Beta-hairpin motif; sequence HFDYYQPESYIPRRDLFIEKDSSI. A Helicase C-terminal domain is found at 433 to 607; that stretch reads QVQDLFDEIK…ELKLRDDEIR (175 aa). Positions 623 to 658 constitute a UVR domain; sequence EKIIKELDKKMRECTKNLDFEEAMRLRDEIAQLRTL.

The protein belongs to the UvrB family. As to quaternary structure, forms a heterotetramer with UvrA during the search for lesions. Interacts with UvrC in an incision complex.

Its subcellular location is the cytoplasm. Its function is as follows. The UvrABC repair system catalyzes the recognition and processing of DNA lesions. A damage recognition complex composed of 2 UvrA and 2 UvrB subunits scans DNA for abnormalities. Upon binding of the UvrA(2)B(2) complex to a putative damaged site, the DNA wraps around one UvrB monomer. DNA wrap is dependent on ATP binding by UvrB and probably causes local melting of the DNA helix, facilitating insertion of UvrB beta-hairpin between the DNA strands. Then UvrB probes one DNA strand for the presence of a lesion. If a lesion is found the UvrA subunits dissociate and the UvrB-DNA preincision complex is formed. This complex is subsequently bound by UvrC and the second UvrB is released. If no lesion is found, the DNA wraps around the other UvrB subunit that will check the other stand for damage. In Helicobacter pylori (strain ATCC 700392 / 26695) (Campylobacter pylori), this protein is UvrABC system protein B.